We begin with the raw amino-acid sequence, 266 residues long: GRIP and coiled-coil domain-containing protein C365.11 (266 aa).

Positions 1-13 are enriched in polar residues; that stretch reads METTVSAKNSLEN. The interval 1 to 88 is disordered; sequence METTVSAKNS…LDEKVKELEN (88 aa). Ser10 carries the phosphoserine modification. Over residues 36 to 49 the composition is skewed to basic residues; it reads ASKKKRKNRKKKKN. The segment covering 63–88 has biased composition (basic and acidic residues); the sequence is EEQRSGSIDSKDKEKPLDEKVKELEN. Residues 73–188 are a coiled coil; that stretch reads KDKEKPLDEK…ESVKSHESEL (116 aa). A phosphoserine mark is found at Ser202 and Ser204. A GRIP domain is found at 216-264; that stretch reads ISKELINKEYARNVLLQFLENHEHRDKILPILSTALDLEEVHQHLILKN.

Its subcellular location is the cytoplasm. This is GRIP and coiled-coil domain-containing protein C365.11 from Schizosaccharomyces pombe (strain 972 / ATCC 24843) (Fission yeast).